Here is a 990-residue protein sequence, read N- to C-terminus: Chondroitin sulfate ABC exolyase (990 aa).

H453 acts as the Proton acceptor in catalysis. Y460 serves as the catalytic Proton donor.

It belongs to the polysaccharide lyase 8 family.

It catalyses the reaction Exolytic removal of Delta(4)-unsaturated disaccharide residues from the non-reducing ends of both polymeric chondroitin/dermatan sulfates and their oligosaccharide fragments.. Its activity is regulated as follows. Inhibited by Zn(2+), whereas Ni(2+), Fe(2+), and Cu(2+) have little or no effect on activity. Broad-specificity glycosaminoglycan lyase, which acts in an exolytic fashion, and preferentially degrades the tetra- and hexasaccharide derivatives of chondroitin sulfate and dermatan sulfate produced by the chondroitin sulfate ABC endolyase, to yield the respective disaccharides. To a lesser extent, is also able to split off disaccharide residues directly from polymeric chondroitin 4- and 6-sulfate, dermatan sulfate, chondroitin, and hyaluronan. Is not active against keratan sulfate, heparan sulfate, and heparin. The protein is Chondroitin sulfate ABC exolyase (ChABCII) of Proteus vulgaris.